We begin with the raw amino-acid sequence, 1446 residues long: Sister chromatid cohesion protein PDS5 homolog B (1446 aa).

The stretch at 383–419 (LLVNDHLLNFVRERTLDKRWRVRKEAMMGLAQIYKKY) is one HEAT repeat. Lys-1136 is modified (N6-acetyllysine). A compositionally biased stretch (polar residues) spans 1137 to 1155 (PLSSAGKQSQTKSSRMETV). The tract at residues 1137–1446 (PLSSAGKQSQ…RRRSSKRERR (310 aa)) is disordered. Phosphoserine is present on residues Ser-1140, Ser-1162, Ser-1166, Ser-1176, Ser-1182, and Ser-1191. The span at 1156–1167 (SNASSSSNPSSP) shows a compositional bias: low complexity. Residues 1172–1184 (GRLDSSEMDHSEN) show a composition bias toward basic and acidic residues. Basic and acidic residues-rich tracts occupy residues 1196–1212 (KKSD…LEKP) and 1223–1241 (PEEK…EQKP). Residues 1243 to 1252 (GSQRGRKRGR) are compositionally biased toward basic residues. Residues 1247–1259 (GRKRGRTASDSDE) constitute a DNA-binding region (a.T hook 1). Thr-1253 carries the post-translational modification Phosphothreonine. Phosphoserine occurs at positions 1255 and 1257. Positions 1263 to 1272 (PEEKRHKEEL) are enriched in basic and acidic residues. At Ser-1281 the chain carries Phosphoserine. The a.T hook 2 DNA-binding region spans 1285 to 1297 (KGKRGRPPKPLGG). Composition is skewed to basic residues over residues 1308–1317 (TSKKGNKKKL) and 1339–1351 (SKSK…KRAQ). Residues 1353–1370 (RAESPETSAVESTQSTPQ) are compositionally biased toward polar residues. Phosphoserine is present on residues Ser-1356 and Ser-1364. Thr-1365 carries the phosphothreonine modification. Ser-1367 bears the Phosphoserine mark. Residue Thr-1368 is modified to Phosphothreonine. The a.T hook 3 DNA-binding region spans 1370 to 1382 (QKGRGRPSKAPSP). Ser-1381, Ser-1415, and Ser-1418 each carry phosphoserine. Acidic residues predominate over residues 1421 to 1431 (TTQEGAEEEDI). Residues 1436-1446 (VRRRSSKRERR) are compositionally biased toward basic residues.

This sequence belongs to the PDS5 family. Interacts with the cohesin complex. Interacts with RAD21; the interaction is direct. Interacts with WAPL (via FGF motifs) or CDCA5 (via the FGF motif); the interaction is direct, cohesin-dependent and competitive. As to expression, expressed in prostate.

It is found in the nucleus. In terms of biological role, regulator of sister chromatid cohesion in mitosis which may stabilize cohesin complex association with chromatin. May couple sister chromatid cohesion during mitosis to DNA replication. Cohesion ensures that chromosome partitioning is accurate in both meiotic and mitotic cells and plays an important role in DNA repair. Plays a role in androgen-induced proliferative arrest in prostate cells. The chain is Sister chromatid cohesion protein PDS5 homolog B (Pds5b) from Mus musculus (Mouse).